Here is a 249-residue protein sequence, read N- to C-terminus: Probable transcriptional regulatory protein CYA_2259 (249 aa).

Belongs to the TACO1 family.

The protein localises to the cytoplasm. The polypeptide is Probable transcriptional regulatory protein CYA_2259 (Synechococcus sp. (strain JA-3-3Ab) (Cyanobacteria bacterium Yellowstone A-Prime)).